We begin with the raw amino-acid sequence, 317 residues long: Ribosomal protein L11 methyltransferase (317 aa).

S-adenosyl-L-methionine contacts are provided by Thr-158, Gly-179, Asp-201, and Asn-244.

This sequence belongs to the methyltransferase superfamily. PrmA family.

The protein localises to the cytoplasm. The catalysed reaction is L-lysyl-[protein] + 3 S-adenosyl-L-methionine = N(6),N(6),N(6)-trimethyl-L-lysyl-[protein] + 3 S-adenosyl-L-homocysteine + 3 H(+). Methylates ribosomal protein L11. This Streptococcus pyogenes serotype M12 (strain MGAS2096) protein is Ribosomal protein L11 methyltransferase.